The primary structure comprises 506 residues: MTTASASNAASSAIPAVNAETPVRVRFCPSPTGTPHVGLIRTALFNWAYARHTGGKLIFRIEDTDSARDSEESYHQLLDALKWLGINWDEGVEVGGPHEPYRQSQRGDIYQDVIAKLKAGGHVYESYSTPDEIEARHKAAGRDPKLGYDGFDRHLTDEQLAQFKAEGREAVLRLRMPDEDLTFNDLVRGEITFKAGSVPDFAVVRANGAPLYTLVNPVDDALMGITHVLRGEDLLSSTPRQIALYRALYAIGVAEYMPEFGHLPYVMGQGNKKLSKRDPESSLFLHRERGFIPEGLLNYLSLLGWSLSADEDIFTVEQLVANFDIHDVLGNPARFDIKKAEAINGTHVRMLAAEDFKERLVPYLRAAGFVGEILTPRQEEILAEAAPLVQERITLLGEAPEMLAFLFKADDAIDVADDARKGLPQNLEEVLDAALAALEPIGEWTAENIQTALKQALVEDLGIKPRAAFGPVRTAISGRRISPPLFESMVILGKDSSLARVRAFRG.

The short motif at 29–39 is the 'HIGH' region element; sequence PSPTGTPHVGL. The 'KMSKS' region signature appears at 273–277; the sequence is KLSKR. Lys-276 provides a ligand contact to ATP.

This sequence belongs to the class-I aminoacyl-tRNA synthetase family. Glutamate--tRNA ligase type 1 subfamily. As to quaternary structure, monomer.

The protein resides in the cytoplasm. The catalysed reaction is tRNA(Glu) + L-glutamate + ATP = L-glutamyl-tRNA(Glu) + AMP + diphosphate. In terms of biological role, catalyzes the attachment of glutamate to tRNA(Glu) in a two-step reaction: glutamate is first activated by ATP to form Glu-AMP and then transferred to the acceptor end of tRNA(Glu). The sequence is that of Glutamate--tRNA ligase from Paenarthrobacter aurescens (strain TC1).